The following is a 131-amino-acid chain: Phosphoribosyl-AMP cyclohydrolase (131 aa).

Asp-78 serves as a coordination point for Mg(2+). Position 79 (Cys-79) interacts with Zn(2+). Positions 80 and 82 each coordinate Mg(2+). Positions 96 and 103 each coordinate Zn(2+).

The protein belongs to the PRA-CH family. In terms of assembly, homodimer. The cofactor is Mg(2+). Zn(2+) is required as a cofactor.

The protein resides in the cytoplasm. The catalysed reaction is 1-(5-phospho-beta-D-ribosyl)-5'-AMP + H2O = 1-(5-phospho-beta-D-ribosyl)-5-[(5-phospho-beta-D-ribosylamino)methylideneamino]imidazole-4-carboxamide. The protein operates within amino-acid biosynthesis; L-histidine biosynthesis; L-histidine from 5-phospho-alpha-D-ribose 1-diphosphate: step 3/9. Catalyzes the hydrolysis of the adenine ring of phosphoribosyl-AMP. The chain is Phosphoribosyl-AMP cyclohydrolase from Thioalkalivibrio sulfidiphilus (strain HL-EbGR7).